A 137-amino-acid polypeptide reads, in one-letter code: Peptide methionine sulfoxide reductase MsrB (137 aa).

Positions 7 to 129 constitute a MsrB domain; sequence AEELKKNLSE…NSASLRFTDG (123 aa). C46, C49, C95, and C98 together coordinate Zn(2+). The active-site Nucleophile is C118.

Belongs to the MsrB Met sulfoxide reductase family. Requires Zn(2+) as cofactor.

The enzyme catalyses L-methionyl-[protein] + [thioredoxin]-disulfide + H2O = L-methionyl-(R)-S-oxide-[protein] + [thioredoxin]-dithiol. The polypeptide is Peptide methionine sulfoxide reductase MsrB (Escherichia coli O8 (strain IAI1)).